Consider the following 206-residue polypeptide: Small ribosomal subunit protein uS4 (206 aa).

Residues 23-47 form a disordered region; sequence AKSPLNRREYGPGQHGQRRKGKLSD. One can recognise an S4 RNA-binding domain in the interval 94 to 157; that stretch reads RRLDAVIYRA…RQLAIVLESV (64 aa).

Belongs to the universal ribosomal protein uS4 family. In terms of assembly, part of the 30S ribosomal subunit. Contacts protein S5. The interaction surface between S4 and S5 is involved in control of translational fidelity.

Its function is as follows. One of the primary rRNA binding proteins, it binds directly to 16S rRNA where it nucleates assembly of the body of the 30S subunit. With S5 and S12 plays an important role in translational accuracy. The sequence is that of Small ribosomal subunit protein uS4 from Paracoccus denitrificans (strain Pd 1222).